We begin with the raw amino-acid sequence, 693 residues long: Elongation factor G 1 (693 aa).

The region spanning 4-281 is the tr-type G domain; the sequence is NKLRNIGISA…AVTRFLPSPH (278 aa). Residues 13–20, 80–84, and 134–137 each bind GTP; these read AHIDSGKT, DTPGH, and NKCD.

The protein belongs to the TRAFAC class translation factor GTPase superfamily. Classic translation factor GTPase family. EF-G/EF-2 subfamily.

It is found in the cytoplasm. Functionally, catalyzes the GTP-dependent ribosomal translocation step during translation elongation. During this step, the ribosome changes from the pre-translocational (PRE) to the post-translocational (POST) state as the newly formed A-site-bound peptidyl-tRNA and P-site-bound deacylated tRNA move to the P and E sites, respectively. Catalyzes the coordinated movement of the two tRNA molecules, the mRNA and conformational changes in the ribosome. This Borreliella burgdorferi (strain ATCC 35210 / DSM 4680 / CIP 102532 / B31) (Borrelia burgdorferi) protein is Elongation factor G 1 (fusA).